We begin with the raw amino-acid sequence, 456 residues long: FAD-dependent monooxygenase sor5 (456 aa).

A helical transmembrane segment spans residues P18–L38. N43 carries an N-linked (GlcNAc...) asparagine glycan. Positions 48 and 119 each coordinate FAD. Residue R200 is part of the active site. The FAD site is built by D331 and A344.

This sequence belongs to the paxM FAD-dependent monooxygenase family. The cofactor is FAD.

It is found in the membrane. It functions in the pathway secondary metabolite biosynthesis. In terms of biological role, FAD-dependent monooxygenase; part of the SOR gene cluster that mediates the biosynthesis of sorbicillinoids, a diverse group of yellow secondary metabolites that restrict growth of competing pathogenic fungi but not of bacteria. Sorbicillinoids biosynthesis requires the action of two PKSs. The SOR cluster is required for the production of trichodimerol and dihydrotrichotetronin, with sor2 being sufficient for production of trichodimerol, but not dihydrotrichotetronin in the light. Sor1 iteratively combines three acetyl units and the growing chain is modified by the ketoacyl reductase subunit, and optional by the enoyl reductase subunit in the second cycle. The polyketide is then handed over to the PKS sor2, which adds three more acetyl units, and two methyl groups. Sor2 releases an aldehyde, which undergoes spontaneous cyclization resulting in the formation of sorbicillin or 2',3'-dihydrosorbicillin. The monooxygenase sor5 oxidizes sorbicillin and 2',3'-dihydrosorbicillin to 2',3'-dihydrosorbicillinol and sorbicillinol, respectively. The oxidoreductase sor8 further converts sorbicillinol into oxosorbicillinol. Sorbicillinol is the building block for the other sorbicillinoids such as disorbicillinol, bisvertinolon, dihydrobisvertinolone, and dihydrotrichotetronine. This Hypocrea jecorina (strain QM6a) (Trichoderma reesei) protein is FAD-dependent monooxygenase sor5.